The following is a 77-amino-acid chain: MAAIEVGRVCIKTLGREAGNTCVIVEVLDKNFVVIDGGVKRRRCNLKHVEPTDKKVDLEKAASTEEVKLALDAAGLL.

Belongs to the eukaryotic ribosomal protein eL14 family.

This is Large ribosomal subunit protein eL14 from Methanococcus maripaludis (strain C7 / ATCC BAA-1331).